A 228-amino-acid chain; its full sequence is Core-capsid bridging protein (228 aa).

The interval 146-177 (ARPPAARISPPRRRRRRRRSPRPRATAAYRSS) is disordered. Positions 155–167 (PPRRRRRRRRSPR) are enriched in basic residues. Over residues 168–177 (PRATAAYRSS) the composition is skewed to low complexity.

This sequence belongs to the adenoviridae core-capsid bridging protein family. As to quaternary structure, monomer. Homodimer. Exists in equilibrium between monomers and dimers in solution. Interacts with the histone-like nucleoprotein; this interactions bridge the virus core to the capsid. Interacts with core protein X; this interactions bridge the virus core to the capsid. Interacts with the endosome lysis protein VI; this interactions bridge the virus core to the capsid. Interacts with the peripentonal hexons. Interacts with host NPM1; this interaction might play a role in virus assembly.

Its subcellular location is the virion. It is found in the host nucleus. It localises to the host nucleolus. In terms of biological role, associates loosely with the viral DNA to form an outer shell around the nucleoprotein-DNA complex and links it with the capsid by binding the endosome lysis protein. Dissociates from the viral genome during entry. Might be involved in nuclear capsid assembly of the viral particles through its association with NPM1/nucleophosmin. The polypeptide is Core-capsid bridging protein (Murine adenovirus A serotype 1 (MAdV-1)).